A 298-amino-acid polypeptide reads, in one-letter code: Probable 2-(5''-triphosphoribosyl)-3'-dephosphocoenzyme-A synthase 2 (298 aa).

This sequence belongs to the CitG/MdcB family.

The enzyme catalyses 3'-dephospho-CoA + ATP = 2'-(5''-triphospho-alpha-D-ribosyl)-3'-dephospho-CoA + adenine. In Salmonella choleraesuis (strain SC-B67), this protein is Probable 2-(5''-triphosphoribosyl)-3'-dephosphocoenzyme-A synthase 2.